The following is a 58-amino-acid chain: Large ribosomal subunit protein uL30 (58 aa).

The protein belongs to the universal ribosomal protein uL30 family. In terms of assembly, part of the 50S ribosomal subunit.

The chain is Large ribosomal subunit protein uL30 from Zymomonas mobilis subsp. mobilis (strain ATCC 31821 / ZM4 / CP4).